We begin with the raw amino-acid sequence, 612 residues long: MRIVFVHPNYHSGGAEIAGSWPPAWVAYLCGALKKAGYTDYHFIDAMTDYVSHEKLAEKLRELQPDIVATTAITPSIYVAEETLKVAMEVVPNALRVLGGIHATFMFRQVLEEAPWIDVIVRGEGEEVLVNLVKAYEADNFAETRRQVKGLAFLDGDEIVSTAAAPTIRDVDSIDPDWGIINWKNYIYEPLGVRVAIPNMARGCPFTCSFCSQWKFWRDYRVRDPKKVVDEIEKLVNEHGVGFFILADEEPTINRKKFIEFCEEMIARGLPDKVKWGINTRVTDVKRDKELLKFYRKAGLVHISLGTEAAAQLKLDVFNKETTVAENKEAIRLLREADIFTEAQFIVGLDNETKETLEETYRMAWDWQPDLANWSMYTPWPFTPLFQELRDQVEVFDYSKYNFVTPIMKPKALTRGELLDGVMNNYRRFYMKKALFHYPWRGTGFRRRYLLGCLKAFLKAGVGRTFYDLGKAGYWGPQSKDKVDFHFDETRKIGNAQMADWEASADRAAKAAERREALRVQGKARAEERNAAKAEAAPILTAGGGGCGGHADGSDCGCGGKKQQQVDEFHVPMACGGGRQQMAEDEFAMPMACGGGKQQMEEAEERLVRPAE.

Residues 9–143 (NYHSGGAEIA…KAYEADNFAE (135 aa)) enclose the B12-binding domain. The region spanning 190-417 (PLGVRVAIPN…MKPKALTRGE (228 aa)) is the Radical SAM core domain. Cys204, Cys208, and Cys211 together coordinate [4Fe-4S] cluster.

The protein belongs to the BchE family. [4Fe-4S] cluster is required as a cofactor. The cofactor is adenosylcob(III)alamin.

The enzyme catalyses Mg-protoporphyrin IX 13-monomethyl ester + 3 S-adenosyl-L-methionine + H2O = 3,8-divinyl protochlorophyllide a + 3 5'-deoxyadenosine + 3 L-methionine + 4 H(+). It participates in porphyrin-containing compound metabolism; bacteriochlorophyll biosynthesis (light-independent). Involved in the tetrapyrrole biosynthetic pathways leading to chlorophyll and bacteriochlorophyll (BChl). Catalyzes the anaerobic formation of the isocyclic ring (E-ring) in Mg-protoporphyrin monomethyl ester (MPE) to yield protochlorophyllide a (PChlide a) via a six-electron oxidation and the formation of an oxo group at position C13 using oxygen from a water molecule. The protein is Anaerobic magnesium-protoporphyrin IX monomethyl ester cyclase of Cereibacter sphaeroides (strain ATCC 17023 / DSM 158 / JCM 6121 / CCUG 31486 / LMG 2827 / NBRC 12203 / NCIMB 8253 / ATH 2.4.1.) (Rhodobacter sphaeroides).